We begin with the raw amino-acid sequence, 125 residues long: uncharacterized protein (125 aa).

The next 2 helical transmembrane spans lie at 28–48 and 54–74; these read VFITHLFFLLHSLLLFLSQFC and FFLPTINLVTHSIKFITLFFF.

The protein localises to the membrane. This is an uncharacterized protein from Saccharomyces cerevisiae (strain ATCC 204508 / S288c) (Baker's yeast).